Reading from the N-terminus, the 184-residue chain is Nucleoside triphosphate pyrophosphatase (184 aa).

Asp66 functions as the Proton acceptor in the catalytic mechanism.

Belongs to the Maf family. A divalent metal cation is required as a cofactor.

The protein localises to the cytoplasm. It carries out the reaction a ribonucleoside 5'-triphosphate + H2O = a ribonucleoside 5'-phosphate + diphosphate + H(+). The catalysed reaction is a 2'-deoxyribonucleoside 5'-triphosphate + H2O = a 2'-deoxyribonucleoside 5'-phosphate + diphosphate + H(+). In terms of biological role, nucleoside triphosphate pyrophosphatase. May have a dual role in cell division arrest and in preventing the incorporation of modified nucleotides into cellular nucleic acids. The chain is Nucleoside triphosphate pyrophosphatase from Prochlorococcus marinus (strain MIT 9313).